The following is a 130-amino-acid chain: Small ribosomal subunit protein uS9 (130 aa).

Positions 109 to 130 are disordered; sequence RMKERKKYGLKGARRAPQFSKR. Basic residues predominate over residues 111-130; it reads KERKKYGLKGARRAPQFSKR.

It belongs to the universal ribosomal protein uS9 family.

The chain is Small ribosomal subunit protein uS9 from Alkaliphilus metalliredigens (strain QYMF).